The sequence spans 551 residues: Ubiquitin carboxyl-terminal hydrolase 24 (551 aa).

Disordered regions lie at residues asparagine 51 to valine 104 and asparagine 163 to valine 188. The USP domain maps to arginine 197–valine 551. Catalysis depends on cysteine 206, which acts as the Nucleophile. Residues serine 329–asparagine 338 show a composition bias toward polar residues. Residues serine 329–proline 349 form a disordered region. Histidine 510 (proton acceptor) is an active-site residue.

It belongs to the peptidase C19 family.

It catalyses the reaction Thiol-dependent hydrolysis of ester, thioester, amide, peptide and isopeptide bonds formed by the C-terminal Gly of ubiquitin (a 76-residue protein attached to proteins as an intracellular targeting signal).. In terms of biological role, recognizes and hydrolyzes the peptide bond at the C-terminal Gly of ubiquitin. Involved in the processing of poly-ubiquitin precursors as well as that of ubiquitinated proteins. The polypeptide is Ubiquitin carboxyl-terminal hydrolase 24 (UBP24) (Arabidopsis thaliana (Mouse-ear cress)).